A 41-amino-acid polypeptide reads, in one-letter code: MDNFKKYLSTAPVLLTVWLSITASGIMIINRLYPDPLIFPI.

A helical transmembrane segment spans residues 7-29 (YLSTAPVLLTVWLSITASGIMII).

Belongs to the PsaJ family.

The protein localises to the plastid. It localises to the chloroplast thylakoid membrane. May help in the organization of the PsaE and PsaF subunits. In Heterosigma akashiwo (strain NIES-293 / 8280G21-1), this protein is Photosystem I reaction center subunit IX.